Here is a 103-residue protein sequence, read N- to C-terminus: Co-chaperonin GroES (103 aa).

It belongs to the GroES chaperonin family. As to quaternary structure, heptamer of 7 subunits arranged in a ring. Interacts with the chaperonin GroEL.

It localises to the cytoplasm. Together with the chaperonin GroEL, plays an essential role in assisting protein folding. The GroEL-GroES system forms a nano-cage that allows encapsulation of the non-native substrate proteins and provides a physical environment optimized to promote and accelerate protein folding. GroES binds to the apical surface of the GroEL ring, thereby capping the opening of the GroEL channel. The polypeptide is Co-chaperonin GroES (Prochlorococcus marinus (strain MIT 9515)).